Reading from the N-terminus, the 640-residue chain is UvrABC system protein C (640 aa).

A GIY-YIG domain is found at 22–101 (NDPGCYLMKD…IKSHQPYFNV (80 aa)). A UVR domain is found at 211–246 (DELRILLEKQMISFSESLKFEEAGSVRDQLKGIDRL).

It belongs to the UvrC family. As to quaternary structure, interacts with UvrB in an incision complex.

It is found in the cytoplasm. In terms of biological role, the UvrABC repair system catalyzes the recognition and processing of DNA lesions. UvrC both incises the 5' and 3' sides of the lesion. The N-terminal half is responsible for the 3' incision and the C-terminal half is responsible for the 5' incision. This is UvrABC system protein C from Prochlorococcus marinus (strain NATL1A).